The sequence spans 266 residues: DNA damage-regulated autophagy modulator protein 2 (266 aa).

The next 6 membrane-spanning stretches (helical) occupy residues 8 to 28 (LSFLPSALVIWTAAAFIFSYI), 53 to 73 (KCLFGAMLNIAAVLCVATIYV), 92 to 112 (NKAGLVLGLLSCLGLSLVANF), 117 to 137 (FFAVHVCGAVLTFGMGSLYMF), 160 to 180 (LLLVIWCGVSAFSMLTCSSLL), and 207 to 227 (ITTAAEWSMSLSFFGFFLTYI).

It belongs to the DRAM/TMEM150 family.

Its subcellular location is the lysosome membrane. The protein resides in the photoreceptor inner segment. It localises to the apical cell membrane. Functionally, plays a role in the initiation of autophagy. In the retina, might be involved in the process of photoreceptor cells renewal and recycling to preserve visual function. Induces apoptotic cell death when coexpressed with DRAM1. This Bos taurus (Bovine) protein is DNA damage-regulated autophagy modulator protein 2 (DRAM2).